The primary structure comprises 232 residues: Urease accessory protein UreF (232 aa).

It belongs to the UreF family. UreD, UreF and UreG form a complex that acts as a GTP-hydrolysis-dependent molecular chaperone, activating the urease apoprotein by helping to assemble the nickel containing metallocenter of UreC. The UreE protein probably delivers the nickel.

The protein localises to the cytoplasm. Its function is as follows. Required for maturation of urease via the functional incorporation of the urease nickel metallocenter. The protein is Urease accessory protein UreF of Trichodesmium erythraeum (strain IMS101).